A 387-amino-acid polypeptide reads, in one-letter code: uncharacterized protein (387 aa).

It to M.jannaschii MJ0043 N-terminal region.

This is an uncharacterized protein from Bacillus subtilis (strain 168).